The sequence spans 260 residues: Small ribosomal subunit protein bS6 (260 aa).

This sequence belongs to the bacterial ribosomal protein bS6 family.

Functionally, binds together with bS18 to 16S ribosomal RNA. In Wolbachia sp. subsp. Brugia malayi (strain TRS), this protein is Small ribosomal subunit protein bS6.